Here is a 977-residue protein sequence, read N- to C-terminus: Disks large-associated protein 3 (977 aa).

The span at 1 to 10 (MRGYHGDRGS) shows a compositional bias: basic and acidic residues. Disordered regions lie at residues 1–24 (MRGY…QHMD), 52–96 (AGLG…MYPG), 137–167 (FHTL…ESPS), 181–289 (AKSH…CLDA), 398–417 (AMGD…SPKA), and 529–582 (PGSS…SADG). Positions 53–73 (GLGHLSPEGPLSLSEGPSSVG) are enriched in low complexity. S58 carries the post-translational modification Phosphoserine. The segment covering 74–87 (PEGGPGGVGAGGGS) has biased composition (gly residues). The segment covering 189–201 (PGKRDYNGPKADG) has biased composition (basic and acidic residues). Positions 221–245 (SHHHHHHHHHHHHQSRHGKRSKSKD) are enriched in basic residues. Residues 258 to 271 (GWWSSDDNLDSDSG) show a composition bias toward low complexity. Phosphoserine occurs at positions 404, 407, 410, and 414. The span at 538–547 (APPPIPPGSQ) shows a compositional bias: pro residues. S641 and S643 each carry phosphoserine. 2 disordered regions span residues 739 to 788 (EGYP…RTSP) and 906 to 939 (EEKK…RQRQ). Basic and acidic residues-rich tracts occupy residues 767–777 (GRRDSWMERGS) and 925–939 (PVKE…RQRQ). 3 positions are modified to phosphoserine: S930, S933, and S965.

Belongs to the SAPAP family. In terms of assembly, interacts with DLG4/PSD-95. In terms of tissue distribution, highly expressed in central and peripherical nervous system (at protein level).

It is found in the cell membrane. The protein localises to the postsynaptic density. It localises to the synapse. Functionally, may play a role in the molecular organization of synapses and neuronal cell signaling. Could be an adapter protein linking ion channel to the subsynaptic cytoskeleton. May induce enrichment of PSD-95/SAP90 at the plasma membrane. The sequence is that of Disks large-associated protein 3 (Dlgap3) from Mus musculus (Mouse).